Reading from the N-terminus, the 149-residue chain is Alpha-crystallin A chain (149 aa).

The 109-residue stretch at 41-149 folds into the sHSP domain; sequence LFRTVLESGI…DTSYSERPIP (109 aa). His89, Glu91, and His96 together coordinate Zn(2+).

This sequence belongs to the small heat shock protein (HSP20) family. As to quaternary structure, heteropolymer composed of three CRYAA and one CRYAB subunits. Inter-subunit bridging via zinc ions enhances stability, which is crucial as there is no protein turn over in the lens. Zinc coordination is achieved at least by His-89, Glu-91 and His-96. His-83 and Glu-85 come from the same molecule within the oligomer, while His-90 residue is provided by another molecule. Can also form homodimers and homotetramers (dimers of dimers) which serve as the building blocks of homooligomers.

It localises to the cytoplasm. The protein localises to the nucleus. Its function is as follows. Contributes to the transparency and refractive index of the lens. May act as a chaperone, preventing aggregation of various proteins under a wide range of stress conditions. This Trachemys scripta elegans (Red-eared slider turtle) protein is Alpha-crystallin A chain (CRYAA).